A 375-amino-acid chain; its full sequence is MQKLQIFVYIYLFMLLVAGPVDLNENSEQKENVEKKGLCNACLWRQSNKSSRLEAIKIQILSKLRLETAPNISKDAIRQLLPKAPPLRELIDQYDVQRDDSSDGSLEDDDYHVTTETVITMPTESDLLAEVQEKPKCCFFKFSSKIQHNKVVKAQLWIYLRPVKTPTTVFVQILRLIKPMKDGTRYTGIRSLKLDMNPGTGIWQSIDVKTVLQNWLKQPESNLGIEIKALDENGHDLAVTFPEPGEEGLNPFLEVKVTDTPKRSRRDFGLDCDEHSTESRCCRYPLTVDFEAFGWDWIIAPKRYKANYCSGECEFLFLQKYPHTHLVHQANPKGSAGPCCTPTKMSPINMLYFNGKEQIIYGKIPGMVVDRCGCS.

The first 18 residues, 1-18 (MQKLQIFVYIYLFMLLVA), serve as a signal peptide directing secretion. The propeptide occupies 19–266 (GPVDLNENSE…VTDTPKRSRR (248 aa)). N-linked (GlcNAc...) asparagine glycosylation is found at Asn-48 and Asn-71. Disulfide bonds link Cys-272-Cys-282, Cys-281-Cys-340, Cys-309-Cys-372, and Cys-313-Cys-374.

This sequence belongs to the TGF-beta family. As to quaternary structure, homodimer; disulfide-linked. Interacts with WFIKKN2, leading to inhibit its activity. Interacts with FSTL3. Synthesized as large precursor molecule that undergoes proteolytic cleavage to generate an N-terminal propeptide and a disulfide linked C-terminal dimer, which is the biologically active molecule. The circulating form consists of a latent complex of the C-terminal dimer and other proteins, including its propeptide, which maintain the C-terminal dimer in a latent, inactive state. Ligand activation requires additional cleavage of the prodomain by a tolloid-like metalloproteinase.

It localises to the secreted. In terms of biological role, acts specifically as a negative regulator of skeletal muscle growth. The polypeptide is Growth/differentiation factor 8 (MSTN) (Capra ibex (Ibex)).